Consider the following 348-residue polypeptide: Major outer membrane protein P.IB (348 aa).

Positions 1–19 are cleaved as a signal peptide; it reads MKKSLIALTLAALPVAAMA.

The protein belongs to the Gram-negative porin family. Homotrimer.

The protein localises to the cell outer membrane. Its function is as follows. Serves as a slightly cation selective porin. Major antigen on the gonococcal cell surface and it may have pathogenic properties in addition to its porin activity. This chain is Major outer membrane protein P.IB (porB), found in Neisseria gonorrhoeae.